Consider the following 101-residue polypeptide: Integration host factor subunit beta (101 aa).

The disordered stretch occupies residues 58–101; that stretch reads ARAGRNPRTGAHVPVDQKSVPFFKTGKEMRERLNRDTGAPDSGA. Basic and acidic residues predominate over residues 82–92; the sequence is TGKEMRERLNR.

The protein belongs to the bacterial histone-like protein family. In terms of assembly, heterodimer of an alpha and a beta chain.

Its function is as follows. This protein is one of the two subunits of integration host factor, a specific DNA-binding protein that functions in genetic recombination as well as in transcriptional and translational control. The sequence is that of Integration host factor subunit beta from Rhodopseudomonas palustris (strain BisB18).